The chain runs to 358 residues: B3 domain-containing protein Os12g0592300 (358 aa).

Positions 25–122 (RIRFFRLMTG…SFDVLIFDAS (98 aa)) form a DNA-binding region, TF-B3 1. The disordered stretch occupies residues 148–215 (YHLSDSEDTS…EKSDDDDEHA (68 aa)). Positions 156–181 (TSTPSTFLVGSPHKASTSKKLNGKTK) are enriched in polar residues. A compositionally biased stretch (acidic residues) spans 203-215 (IEEEKSDDDDEHA). The segment at residues 252 to 350 (FVTVLQAPQI…TMTVHVIGKV (99 aa)) is a DNA-binding region (TF-B3 2).

Its subcellular location is the nucleus. The polypeptide is B3 domain-containing protein Os12g0592300 (Oryza sativa subsp. japonica (Rice)).